A 239-amino-acid polypeptide reads, in one-letter code: Enolase-phosphatase E1 (239 aa).

This sequence belongs to the HAD-like hydrolase superfamily. MasA/MtnC family. In terms of assembly, monomer. It depends on Mg(2+) as a cofactor.

The enzyme catalyses 5-methylsulfanyl-2,3-dioxopentyl phosphate + H2O = 1,2-dihydroxy-5-(methylsulfanyl)pent-1-en-3-one + phosphate. The protein operates within amino-acid biosynthesis; L-methionine biosynthesis via salvage pathway; L-methionine from S-methyl-5-thio-alpha-D-ribose 1-phosphate: step 3/6. It participates in amino-acid biosynthesis; L-methionine biosynthesis via salvage pathway; L-methionine from S-methyl-5-thio-alpha-D-ribose 1-phosphate: step 4/6. Bifunctional enzyme that catalyzes the enolization of 2,3-diketo-5-methylthiopentyl-1-phosphate (DK-MTP-1-P) into the intermediate 2-hydroxy-3-keto-5-methylthiopentenyl-1-phosphate (HK-MTPenyl-1-P), which is then dephosphorylated to form the acireductone 1,2-dihydroxy-3-keto-5-methylthiopentene (DHK-MTPene). In Streptomyces avermitilis (strain ATCC 31267 / DSM 46492 / JCM 5070 / NBRC 14893 / NCIMB 12804 / NRRL 8165 / MA-4680), this protein is Enolase-phosphatase E1.